The following is a 457-amino-acid chain: CUB1 family protein C30C2.08 (457 aa).

Coiled coils occupy residues 119–174 and 418–448; these read TQND…NISK and QELV…EERE.

This sequence belongs to the CUB1 family.

It is found in the cytoplasm. Its subcellular location is the nucleus. In terms of biological role, involved in bleomycin tolerance with links to DNA repair and/or proteasome function. In Schizosaccharomyces pombe (strain 972 / ATCC 24843) (Fission yeast), this protein is CUB1 family protein C30C2.08.